We begin with the raw amino-acid sequence, 266 residues long: 3-methyl-2-oxobutanoate hydroxymethyltransferase 2 (266 aa).

Asp45 and Asp84 together coordinate Mg(2+). Residues 45–46 (DS), Asp84, and Lys112 contribute to the 3-methyl-2-oxobutanoate site. Position 114 (Glu114) interacts with Mg(2+). Glu181 functions as the Proton acceptor in the catalytic mechanism.

Belongs to the PanB family. In terms of assembly, homodecamer; pentamer of dimers. Requires Mg(2+) as cofactor.

The protein localises to the cytoplasm. It carries out the reaction 3-methyl-2-oxobutanoate + (6R)-5,10-methylene-5,6,7,8-tetrahydrofolate + H2O = 2-dehydropantoate + (6S)-5,6,7,8-tetrahydrofolate. It functions in the pathway cofactor biosynthesis; (R)-pantothenate biosynthesis; (R)-pantoate from 3-methyl-2-oxobutanoate: step 1/2. Its function is as follows. Catalyzes the reversible reaction in which hydroxymethyl group from 5,10-methylenetetrahydrofolate is transferred onto alpha-ketoisovalerate to form ketopantoate. The chain is 3-methyl-2-oxobutanoate hydroxymethyltransferase 2 from Pseudomonas fluorescens (strain ATCC BAA-477 / NRRL B-23932 / Pf-5).